Reading from the N-terminus, the 169-residue chain is MARPIVVLVGPPGAGKSTIGRRLARALNADLVDSDELIEKATGKACGEVFSELGEPAFRELEAHHVAEALNHDGVVSLGGGAILTESTRELLREHDVVWIDVSVAEGVRRTAGERTRPVLAADDPVEHYRNLLETRRPLYEEVSTFRVRTNSRSPQQVVAEILHHLEDD.

13-18 (GAGKST) serves as a coordination point for ATP. Serine 17 provides a ligand contact to Mg(2+). The substrate site is built by aspartate 35, arginine 59, and glycine 80. An ATP-binding site is contributed by arginine 117. Arginine 136 provides a ligand contact to substrate. Arginine 153 lines the ATP pocket.

The protein belongs to the shikimate kinase family. Monomer. Mg(2+) serves as cofactor.

The protein localises to the cytoplasm. It catalyses the reaction shikimate + ATP = 3-phosphoshikimate + ADP + H(+). The protein operates within metabolic intermediate biosynthesis; chorismate biosynthesis; chorismate from D-erythrose 4-phosphate and phosphoenolpyruvate: step 5/7. Functionally, catalyzes the specific phosphorylation of the 3-hydroxyl group of shikimic acid using ATP as a cosubstrate. This Corynebacterium efficiens (strain DSM 44549 / YS-314 / AJ 12310 / JCM 11189 / NBRC 100395) protein is Shikimate kinase.